Consider the following 159-residue polypeptide: Small ribosomal subunit protein uS4 (159 aa).

Residues 106-158 enclose the S4 RNA-binding domain; the sequence is RRLQTLVFRMGLAKSIHHARQLVVHGHVLVAGRRVTSPGFLVPRELEDKITIE.

Belongs to the universal ribosomal protein uS4 family. Part of the 30S ribosomal subunit. Contacts protein S5. The interaction surface between S4 and S5 is involved in control of translational fidelity.

In terms of biological role, one of the primary rRNA binding proteins, it binds directly to 16S rRNA where it nucleates assembly of the body of the 30S subunit. Its function is as follows. With S5 and S12 plays an important role in translational accuracy. The chain is Small ribosomal subunit protein uS4 from Pyrobaculum calidifontis (strain DSM 21063 / JCM 11548 / VA1).